A 183-amino-acid chain; its full sequence is Large ribosomal subunit protein uL6 (183 aa).

Belongs to the universal ribosomal protein uL6 family. Part of the 50S ribosomal subunit.

In terms of biological role, this protein binds to the 23S rRNA, and is important in its secondary structure. It is located near the subunit interface in the base of the L7/L12 stalk, and near the tRNA binding site of the peptidyltransferase center. This is Large ribosomal subunit protein uL6 from Methanococcus aeolicus (strain ATCC BAA-1280 / DSM 17508 / OCM 812 / Nankai-3).